Consider the following 278-residue polypeptide: MTRIESTFEILKAQNKKALIPYVMAGDPNPSNFVGLLHDLVKHGADMIEVGLPFSDPMADGPTVALAGERALAAGTSTRDALKMVAEFRQQDTQTPIILMGYLNPVEIIGYDNFVALCEQSGVDGILMVDLPPAEAGSFTQHLTEHSMNEIFLLSPTTLPERREQVLTHCGGYIYYVSLKGVTGSATLDTDDVATQVQAIKAETDLPVCVGFGIRDAASAKAIGAHADGIIVGSALVQNFADIDGNDATAVAHAQQKIMAKMTELREALDSLSVSSNG.

Residues glutamate 49 and aspartate 60 each act as proton acceptor in the active site.

The protein belongs to the TrpA family. In terms of assembly, tetramer of two alpha and two beta chains.

It catalyses the reaction (1S,2R)-1-C-(indol-3-yl)glycerol 3-phosphate + L-serine = D-glyceraldehyde 3-phosphate + L-tryptophan + H2O. It functions in the pathway amino-acid biosynthesis; L-tryptophan biosynthesis; L-tryptophan from chorismate: step 5/5. The alpha subunit is responsible for the aldol cleavage of indoleglycerol phosphate to indole and glyceraldehyde 3-phosphate. The polypeptide is Tryptophan synthase alpha chain (Psychrobacter arcticus (strain DSM 17307 / VKM B-2377 / 273-4)).